A 236-amino-acid polypeptide reads, in one-letter code: Probable chemoreceptor glutamine deamidase CheD (236 aa).

The interval 1-20 (MIEFGKRATPQSAADAVRGD) is disordered.

The protein belongs to the CheD family.

The catalysed reaction is L-glutaminyl-[protein] + H2O = L-glutamyl-[protein] + NH4(+). Functionally, probably deamidates glutamine residues to glutamate on methyl-accepting chemotaxis receptors (MCPs), playing an important role in chemotaxis. This is Probable chemoreceptor glutamine deamidase CheD from Ralstonia pickettii (strain 12J).